A 164-amino-acid polypeptide reads, in one-letter code: Diphosphoinositol polyphosphate phosphohydrolase 3-beta (164 aa).

Substrate-binding positions include arginine 9, 17–19, and 38–40; these read KKR and SSR. Positions 17 to 144 constitute a Nudix hydrolase domain; that stretch reads KKRAACLCFR…VHAEYLEKLK (128 aa). The Mg(2+) site is built by glycine 49 and glutamate 65. Positions 50–71 match the Nudix box motif; that stretch reads GGMEPEEEPGGAAVREVYEEAG. Glutamate 68 serves as the catalytic Proton acceptor. Mg(2+) is bound at residue glutamate 69. Substrate contacts are provided by residues 89 to 91, arginine 115, and lysine 133; that span reads RKH. Residues 144-164 form a disordered region; the sequence is KLGGSPTNGNSMAPSSPDSDP. A compositionally biased stretch (polar residues) spans 148–164; that stretch reads SPTNGNSMAPSSPDSDP.

The protein belongs to the Nudix hydrolase family. DIPP subfamily. It depends on Mg(2+) as a cofactor. Mn(2+) is required as a cofactor. In terms of tissue distribution, mainly expressed in testis and, at lower level in brain. According to PubMed:12121577, it is also expressed in pancreas and weakly expressed in thymus, prostate, ovary, lung, small intestine and heart.

The protein localises to the cytoplasm. It catalyses the reaction diphospho-myo-inositol polyphosphate + H2O = myo-inositol polyphosphate + phosphate.. The catalysed reaction is P(1),P(6)-bis(5'-adenosyl) hexaphosphate + H2O = adenosine 5'-pentaphosphate + AMP + 2 H(+). The enzyme catalyses P(1),P(5)-bis(5'-adenosyl) pentaphosphate + H2O = adenosine 5'-tetraphosphate + AMP + 2 H(+). Cleaves a beta-phosphate from the diphosphate groups in PP-InsP5 (diphosphoinositol pentakisphosphate), suggesting that it may play a role in signal transduction. Also able to catalyze the hydrolysis of dinucleoside oligophosphates, with Ap6A and Ap5A being the preferred substrates. The major reaction products are ADP and p4a from Ap6A and ADP and ATP from Ap5A. Also able to hydrolyze 5-phosphoribose 1-diphosphate. The polypeptide is Diphosphoinositol polyphosphate phosphohydrolase 3-beta (Homo sapiens (Human)).